The following is a 271-amino-acid chain: Formamidopyrimidine-DNA glycosylase (271 aa).

Pro2 serves as the catalytic Schiff-base intermediate with DNA. Catalysis depends on Glu3, which acts as the Proton donor. Residue Lys58 is the Proton donor; for beta-elimination activity of the active site. 3 residues coordinate DNA: His92, Arg111, and Lys152. Residues 237–271 (YVYGKVQKPCKICNNIITLIRQNGRSTYFCNACQN) form an FPG-type zinc finger. The Proton donor; for delta-elimination activity role is filled by Arg261.

Belongs to the FPG family. Monomer. The cofactor is Zn(2+).

The enzyme catalyses Hydrolysis of DNA containing ring-opened 7-methylguanine residues, releasing 2,6-diamino-4-hydroxy-5-(N-methyl)formamidopyrimidine.. The catalysed reaction is 2'-deoxyribonucleotide-(2'-deoxyribose 5'-phosphate)-2'-deoxyribonucleotide-DNA = a 3'-end 2'-deoxyribonucleotide-(2,3-dehydro-2,3-deoxyribose 5'-phosphate)-DNA + a 5'-end 5'-phospho-2'-deoxyribonucleoside-DNA + H(+). Its function is as follows. Involved in base excision repair of DNA damaged by oxidation or by mutagenic agents. Acts as a DNA glycosylase that recognizes and removes damaged bases. Has a preference for oxidized purines, such as 7,8-dihydro-8-oxoguanine (8-oxoG). Has AP (apurinic/apyrimidinic) lyase activity and introduces nicks in the DNA strand. Cleaves the DNA backbone by beta-delta elimination to generate a single-strand break at the site of the removed base with both 3'- and 5'-phosphates. This is Formamidopyrimidine-DNA glycosylase from Wolbachia pipientis wMel.